The sequence spans 209 residues: dTTP/UTP pyrophosphatase (209 aa).

Catalysis depends on Asp88, which acts as the Proton acceptor.

Belongs to the Maf family. YhdE subfamily. The cofactor is a divalent metal cation.

The protein resides in the cytoplasm. The enzyme catalyses dTTP + H2O = dTMP + diphosphate + H(+). It carries out the reaction UTP + H2O = UMP + diphosphate + H(+). Functionally, nucleoside triphosphate pyrophosphatase that hydrolyzes dTTP and UTP. May have a dual role in cell division arrest and in preventing the incorporation of modified nucleotides into cellular nucleic acids. This Burkholderia mallei (strain ATCC 23344) protein is dTTP/UTP pyrophosphatase.